A 632-amino-acid polypeptide reads, in one-letter code: Extracellular metalloproteinase 1 (632 aa).

An N-terminal signal peptide occupies residues 1 to 19 (MHGLLLAAGLLSLPLRVLA). Residues 20–243 (HPQPSTSLTS…VHNVVDYVSH (224 aa)) constitute a propeptide that is removed on maturation. Residue N284 is glycosylated (N-linked (GlcNAc...) asparagine). H427 contacts Zn(2+). Residue E428 is part of the active site. H431 contacts Zn(2+). Residues N591 and N620 are each glycosylated (N-linked (GlcNAc...) asparagine).

Belongs to the peptidase M36 family. Requires Zn(2+) as cofactor.

Its subcellular location is the secreted. Its function is as follows. Secreted metalloproteinase that allows assimilation of proteinaceous substrates and probably acts as a virulence factor. The sequence is that of Extracellular metalloproteinase 1 (MEP1) from Arthroderma gypseum (strain ATCC MYA-4604 / CBS 118893) (Microsporum gypseum).